The chain runs to 433 residues: F-box/kelch-repeat protein At1g24800 (433 aa).

The F-box domain occupies 23–71 (TSMCDLPPKLVGEKILTRIPITSLRAVRSTCKLWNALTKDRVLGKAAAQ). Kelch repeat units follow at residues 170–216 (HKIL…LYGV) and 286–337 (VLYH…RFDN).

The protein is F-box/kelch-repeat protein At1g24800 of Arabidopsis thaliana (Mouse-ear cress).